The sequence spans 391 residues: Multidrug resistance protein MdtL (391 aa).

A run of 12 helical transmembrane segments spans residues 4-24 (FLIC…MYLV), 42-62 (IAFS…GKVA), 69-89 (PVAI…SLAE), 93-113 (LFLA…VVAF), 131-151 (LLNG…HLIM), 158-178 (SLFW…LFIL), 203-222 (FFLS…LTFV), 245-265 (ALTA…LGIF), 269-289 (TLMI…AVSP), 293-313 (VSLF…GVAM), 331-351 (LGIA…VVGI), and 356-376 (MLIG…MFVA).

This sequence belongs to the major facilitator superfamily. DHA1 family. MdtL (TC 2.A.1.2.22) subfamily.

Its subcellular location is the cell inner membrane. Functionally, confers resistance to chloramphenicol. The protein is Multidrug resistance protein MdtL of Escherichia coli O127:H6 (strain E2348/69 / EPEC).